Consider the following 247-residue polypeptide: ATP synthase subunit a, chloroplastic (247 aa).

The next 5 helical transmembrane spans lie at Q38–V58, V95–L115, I134–S154, L199–L219, and G220–G240.

The protein belongs to the ATPase A chain family. In terms of assembly, F-type ATPases have 2 components, CF(1) - the catalytic core - and CF(0) - the membrane proton channel. CF(1) has five subunits: alpha(3), beta(3), gamma(1), delta(1), epsilon(1). CF(0) has four main subunits: a, b, b' and c.

It localises to the plastid. It is found in the chloroplast thylakoid membrane. Functionally, key component of the proton channel; it plays a direct role in the translocation of protons across the membrane. The sequence is that of ATP synthase subunit a, chloroplastic from Lotus japonicus (Lotus corniculatus var. japonicus).